The following is a 348-amino-acid chain: S-adenosylmethionine:tRNA ribosyltransferase-isomerase (348 aa).

Belongs to the QueA family. As to quaternary structure, monomer.

It localises to the cytoplasm. The enzyme catalyses 7-aminomethyl-7-carbaguanosine(34) in tRNA + S-adenosyl-L-methionine = epoxyqueuosine(34) in tRNA + adenine + L-methionine + 2 H(+). It functions in the pathway tRNA modification; tRNA-queuosine biosynthesis. Functionally, transfers and isomerizes the ribose moiety from AdoMet to the 7-aminomethyl group of 7-deazaguanine (preQ1-tRNA) to give epoxyqueuosine (oQ-tRNA). The polypeptide is S-adenosylmethionine:tRNA ribosyltransferase-isomerase (Polynucleobacter asymbioticus (strain DSM 18221 / CIP 109841 / QLW-P1DMWA-1) (Polynucleobacter necessarius subsp. asymbioticus)).